Here is a 30-residue protein sequence, read N- to C-terminus: Dicynthaurin (30 aa).

Threonine amide is present on threonine 30.

As to quaternary structure, homodimer.

The protein resides in the secreted. Functionally, shows antibacterial activity against both Gram-positive and Gram-negative bacteria. Its antimicrobial activity is optimal at NaCl concentrations below 100 mM, suggesting that the antimicrobial actions of this peptide may take place intracellularly rather than extracellularly. Has no activity against the fungus C.albicans. Has modest hemolytic activity. This chain is Dicynthaurin, found in Halocynthia aurantium (Sea peach).